The sequence spans 950 residues: Glycine dehydrogenase (decarboxylating) (950 aa).

K698 is subject to N6-(pyridoxal phosphate)lysine.

It belongs to the GcvP family. As to quaternary structure, the glycine cleavage system is composed of four proteins: P, T, L and H. Requires pyridoxal 5'-phosphate as cofactor.

The enzyme catalyses N(6)-[(R)-lipoyl]-L-lysyl-[glycine-cleavage complex H protein] + glycine + H(+) = N(6)-[(R)-S(8)-aminomethyldihydrolipoyl]-L-lysyl-[glycine-cleavage complex H protein] + CO2. The glycine cleavage system catalyzes the degradation of glycine. The P protein binds the alpha-amino group of glycine through its pyridoxal phosphate cofactor; CO(2) is released and the remaining methylamine moiety is then transferred to the lipoamide cofactor of the H protein. This is Glycine dehydrogenase (decarboxylating) from Neisseria gonorrhoeae (strain ATCC 700825 / FA 1090).